The chain runs to 251 residues: Regulator of G-protein signaling 7-binding protein B (251 aa).

Residues 1 to 43 (MCSAPNGRKNRPRSAANIFQIGKSSVRDPERRESTESARRAQR) form a disordered region. Residues 25 to 43 (SVRDPERRESTESARRAQR) show a composition bias toward basic and acidic residues. 2 S-palmitoyl cysteine lipidation sites follow: C246 and C247.

It belongs to the RGS7BP/RGS9BP family. Palmitoylated. Undergoes rapid palmitoylation turnover. Palmitoylation regulates the cell membrane and nuclear shuttling and the regulation of GPCR signaling. Upon depalmitoylation, it is targeted from the plasma membrane into the nucleus. GPCR signaling inhibits depalmitoylation and promotes localization to the plasma membrane.

It is found in the nucleus. The protein localises to the cytoplasm. The protein resides in the cell membrane. Regulator of G protein-coupled receptor (GPCR) signaling. Regulatory subunit of the R7-Gbeta5 complexes that acts by controlling the subcellular location of the R7-Gbeta5 complexes. When palmitoylated, it targets the R7-Gbeta5 complexes to the plasma membrane, leading to inhibit G protein alpha subunits. When it is unpalmitoylated, the R7-Gbeta5 complexes undergo a nuclear/cytoplasmic shuttling. This chain is Regulator of G-protein signaling 7-binding protein B (rgs7bpb), found in Danio rerio (Zebrafish).